The chain runs to 239 residues: Putative ankyrin repeat protein RBE_0489 (239 aa).

ANK repeat units follow at residues Ile-23 to Ala-52, Gly-80 to Ala-109, and Phe-113 to Leu-143.

The polypeptide is Putative ankyrin repeat protein RBE_0489 (Rickettsia bellii (strain RML369-C)).